A 489-amino-acid polypeptide reads, in one-letter code: Membrane-bound acylglycerophosphatidylinositol O-acyltransferase frj (489 aa).

The next 3 helical transmembrane spans lie at 2-22 (SIDD…GSYV), 40-60 (VLVV…SLAL), and 75-95 (LVTF…DFYF). Active-site residues include Asn-331 and His-364. A run of 2 helical transmembrane segments spans residues 405-425 (VIFW…FLLS) and 433-453 (FYSS…ALGF).

Belongs to the membrane-bound acyltransferase family.

The protein resides in the membrane. It carries out the reaction a 1-acyl-sn-glycero-3-phospho-(1D-myo-inositol) + (5Z,8Z,11Z,14Z)-eicosatetraenoyl-CoA = a 1-acyl-2-(5Z,8Z,11Z,14Z-eicosatetraenoyl)-sn-glycero-3-phospho-(1D-myo-inositol) + CoA. It catalyses the reaction a 1-acyl-sn-glycero-3-phosphocholine + an acyl-CoA = a 1,2-diacyl-sn-glycero-3-phosphocholine + CoA. The enzyme catalyses (9Z)-hexadecenoyl-CoA + 1-hexadecanoyl-sn-glycero-3-phosphocholine = 1-hexadecanoyl-2-(9Z-hexadecenoyl)-sn-glycero-3-phosphocholine + CoA. The catalysed reaction is a 1-acyl-sn-glycero-3-phospho-L-serine + an acyl-CoA = a 1,2-diacyl-sn-glycero-3-phospho-L-serine + CoA. It carries out the reaction 1-(9Z-octadecenoyl)-sn-glycero-3-phospho-L-serine + (9Z)-hexadecenoyl-CoA = 1-(9Z-octadecenoyl)-2-(9Z-hexadecenoyl)-sn-glycero-3-phospho-L-serine + CoA. It catalyses the reaction a 1-acyl-sn-glycero-3-phosphoethanolamine + an acyl-CoA = a 1,2-diacyl-sn-glycero-3-phosphoethanolamine + CoA. The enzyme catalyses 1-hexadecanoyl-sn-glycero-3-phosphoethanolamine + (9Z)-hexadecenoyl-CoA = 1-hexadecanoyl-2-(9Z)-hexadecenoyl-sn-glycero-3-phosphoethanolamine + CoA. Its pathway is lipid metabolism; phospholipid metabolism. In terms of biological role, acyltransferase that mediates the acylation of lysophospholipids to produce phospholipids (glycerophospholipids). Highest activity with lysophosphatidylinositol (1-acyl-sn-glycero-3-phospho-(1D-myo-inositol) or LPI) producing phosphatidylinositol (1,2-diacyl-sn-glycero-3-phospho-(1D-myo-inositol) or PI) (LPIAT activity), but also converts lysophosphatidylcholine (1-acyl-sn-glycero-3-phosphocholine or LPC) to phosphatidylcholine (1,2-diacyl-sn-glycero-3-phosphocholine or PC) (LPCAT activity), lysophosphatidylserine (1-acyl-2-hydroxy-sn-glycero-3-phospho-L-serine or LPS) to phosphatidylserine (1,2-diacyl-sn-glycero-3-phospho-L-serine or PS) (LPSAT activity), and lysophosphatidylethanolamine (1-acyl-sn-glycero-3-phosphoethanolamine or LPE) producing phosphatidylethanolamine (1,2-diacyl-sn-glycero-3-phosphoethanolamine or PE) (LPEAT activity). Has a preference for unsaturated fatty acid arachidonoyl-CoA ((5Z,8Z,11Z,14Z)-eicosatetraenoyl-CoA). Glycerophospholipids are important structural and functional components of cellular membrane, acyl-chain remodeling regulates the molecular species distribution of glycerophospholipids which can affect membrane fluidity and curvature. This is Membrane-bound acylglycerophosphatidylinositol O-acyltransferase frj from Drosophila melanogaster (Fruit fly).